A 97-amino-acid chain; its full sequence is Peptide YY-A (97 aa).

Positions 1–28 are cleaved as a signal peptide; sequence MAVMLKPWTVVATVLICVLLCLGTFVDA. At Tyr-64 the chain carries Tyrosine amide. Positions 68–97 are cleaved as a propeptide — C-terminal extension; that stretch reads STSEDVMAELLFGDDTEHKQRSRYDDSFMW.

This sequence belongs to the NPY family. In terms of tissue distribution, mainly expressed in brainstem neurons, and in the telencephalon. Also expressed in intestinal endocrine cells.

The protein localises to the secreted. The chain is Peptide YY-A (pyya) from Danio rerio (Zebrafish).